Consider the following 93-residue polypeptide: MASKAILEELNILSSKIFGTQYKSNNSRTGRKFVVQELKGAKLKSYYPATINYRQLRTLLNDKTFPDSDEELRMEIRKGRIRQGKGASKSKKK.

Belongs to the mitochondrion-specific ribosomal protein mS33 family. As to quaternary structure, component of the mitochondrial small ribosomal subunit (mt-SSU). Mature yeast 74S mitochondrial ribosomes consist of a small (37S) and a large (54S) subunit. The 37S small subunit contains a 15S ribosomal RNA (15S mt-rRNA) and at least 32 different proteins. The 54S large subunit contains a 21S rRNA (21S mt-rRNA) and at least 45 different proteins.

The protein resides in the mitochondrion. Its function is as follows. Component of the mitochondrial ribosome (mitoribosome), a dedicated translation machinery responsible for the synthesis of mitochondrial genome-encoded proteins, including at least some of the essential transmembrane subunits of the mitochondrial respiratory chain. The mitoribosomes are attached to the mitochondrial inner membrane and translation products are cotranslationally integrated into the membrane. In Schizosaccharomyces pombe (strain 972 / ATCC 24843) (Fission yeast), this protein is Small ribosomal subunit protein mS33 (rsm27).